A 635-amino-acid polypeptide reads, in one-letter code: Biosynthetic arginine decarboxylase (635 aa).

N6-(pyridoxal phosphate)lysine is present on Lys101. Residue 284 to 294 (VDVGGGLGVDY) coordinates substrate.

The protein belongs to the Orn/Lys/Arg decarboxylase class-II family. SpeA subfamily. It depends on Mg(2+) as a cofactor. Pyridoxal 5'-phosphate serves as cofactor.

The enzyme catalyses L-arginine + H(+) = agmatine + CO2. Its pathway is amine and polyamine biosynthesis; agmatine biosynthesis; agmatine from L-arginine: step 1/1. Catalyzes the biosynthesis of agmatine from arginine. The protein is Biosynthetic arginine decarboxylase of Tolumonas auensis (strain DSM 9187 / NBRC 110442 / TA 4).